A 64-amino-acid polypeptide reads, in one-letter code: Large ribosomal subunit protein bL35 (64 aa).

Positions 1 to 15 (MPKQKSHSGASKRFR) are enriched in basic residues. The segment at 1 to 22 (MPKQKSHSGASKRFRVTGSGKV) is disordered.

The protein belongs to the bacterial ribosomal protein bL35 family.

This chain is Large ribosomal subunit protein bL35, found in Frankia casuarinae (strain DSM 45818 / CECT 9043 / HFP020203 / CcI3).